We begin with the raw amino-acid sequence, 186 residues long: MSEPASISAGIAQRYATAIFAIAQDNNDLKGLETGINDLTAALGESADLRSLIASPLVSRAEQEAAITAVAKKMKLNPVLANALSLMAQKRRLFVLPQLLTALRDALAEARGEVTAEVASAKALTKTQIEKLTKTLSEKVGKSVTINATVDESLIGGLVVKVGSKMIDSSIRSKLNSLQNAMKEVG.

Belongs to the ATPase delta chain family. As to quaternary structure, F-type ATPases have 2 components, F(1) - the catalytic core - and F(0) - the membrane proton channel. F(1) has five subunits: alpha(3), beta(3), gamma(1), delta(1), epsilon(1). F(0) has three main subunits: a(1), b(2) and c(10-14). The alpha and beta chains form an alternating ring which encloses part of the gamma chain. F(1) is attached to F(0) by a central stalk formed by the gamma and epsilon chains, while a peripheral stalk is formed by the delta and b chains.

Its subcellular location is the cell inner membrane. Functionally, f(1)F(0) ATP synthase produces ATP from ADP in the presence of a proton or sodium gradient. F-type ATPases consist of two structural domains, F(1) containing the extramembraneous catalytic core and F(0) containing the membrane proton channel, linked together by a central stalk and a peripheral stalk. During catalysis, ATP synthesis in the catalytic domain of F(1) is coupled via a rotary mechanism of the central stalk subunits to proton translocation. Its function is as follows. This protein is part of the stalk that links CF(0) to CF(1). It either transmits conformational changes from CF(0) to CF(1) or is implicated in proton conduction. This chain is ATP synthase subunit delta, found in Ruegeria pomeroyi (strain ATCC 700808 / DSM 15171 / DSS-3) (Silicibacter pomeroyi).